A 184-amino-acid chain; its full sequence is ATP synthase subunit b, chloroplastic (184 aa).

Residues 27-49 (LATNLINLSVVLGVLIFFGKGVL) traverse the membrane as a helical segment.

The protein belongs to the ATPase B chain family. F-type ATPases have 2 components, F(1) - the catalytic core - and F(0) - the membrane proton channel. F(1) has five subunits: alpha(3), beta(3), gamma(1), delta(1), epsilon(1). F(0) has four main subunits: a(1), b(1), b'(1) and c(10-14). The alpha and beta chains form an alternating ring which encloses part of the gamma chain. F(1) is attached to F(0) by a central stalk formed by the gamma and epsilon chains, while a peripheral stalk is formed by the delta, b and b' chains.

It localises to the plastid. It is found in the chloroplast thylakoid membrane. Its function is as follows. F(1)F(0) ATP synthase produces ATP from ADP in the presence of a proton or sodium gradient. F-type ATPases consist of two structural domains, F(1) containing the extramembraneous catalytic core and F(0) containing the membrane proton channel, linked together by a central stalk and a peripheral stalk. During catalysis, ATP synthesis in the catalytic domain of F(1) is coupled via a rotary mechanism of the central stalk subunits to proton translocation. Component of the F(0) channel, it forms part of the peripheral stalk, linking F(1) to F(0). This is ATP synthase subunit b, chloroplastic from Nicotiana tabacum (Common tobacco).